Here is a 103-residue protein sequence, read N- to C-terminus: KRSSRDIGTRINQIIPEGEFVGNLNDLPKARFNFVPHREVGLMTAVYLDEEFGMPCISTTPAGIIDTAECIRQMQERVGKWASAPPKEKVDHEPYIDQHTRSV.

Residues 81–103 (WASAPPKEKVDHEPYIDQHTRSV) form a disordered region. Over residues 86 to 103 (PKEKVDHEPYIDQHTRSV) the composition is skewed to basic and acidic residues.

It belongs to the ChlB/BchB/BchZ family. As to quaternary structure, protochlorophyllide reductase is composed of three subunits; ChlL, ChlN and ChlB. Forms a heterotetramer of two ChlB and two ChlN subunits. [4Fe-4S] cluster serves as cofactor.

Its subcellular location is the plastid. The protein localises to the chloroplast. It catalyses the reaction chlorophyllide a + oxidized 2[4Fe-4S]-[ferredoxin] + 2 ADP + 2 phosphate = protochlorophyllide a + reduced 2[4Fe-4S]-[ferredoxin] + 2 ATP + 2 H2O. It participates in porphyrin-containing compound metabolism; chlorophyll biosynthesis (light-independent). Component of the dark-operative protochlorophyllide reductase (DPOR) that uses Mg-ATP and reduced ferredoxin to reduce ring D of protochlorophyllide (Pchlide) to form chlorophyllide a (Chlide). This reaction is light-independent. The NB-protein (ChlN-ChlB) is the catalytic component of the complex. This chain is Light-independent protochlorophyllide reductase subunit B (chlB), found in Selaginella mollis (Spikemoss).